The following is a 245-amino-acid chain: Biosynthetic peptidoglycan transglycosylase (245 aa).

Residues 19 to 41 (CLRWVLAAPLLFAAASVLQVLFL) traverse the membrane as a helical segment.

Belongs to the glycosyltransferase 51 family.

The protein resides in the cell inner membrane. The enzyme catalyses [GlcNAc-(1-&gt;4)-Mur2Ac(oyl-L-Ala-gamma-D-Glu-L-Lys-D-Ala-D-Ala)](n)-di-trans,octa-cis-undecaprenyl diphosphate + beta-D-GlcNAc-(1-&gt;4)-Mur2Ac(oyl-L-Ala-gamma-D-Glu-L-Lys-D-Ala-D-Ala)-di-trans,octa-cis-undecaprenyl diphosphate = [GlcNAc-(1-&gt;4)-Mur2Ac(oyl-L-Ala-gamma-D-Glu-L-Lys-D-Ala-D-Ala)](n+1)-di-trans,octa-cis-undecaprenyl diphosphate + di-trans,octa-cis-undecaprenyl diphosphate + H(+). Its pathway is cell wall biogenesis; peptidoglycan biosynthesis. Its function is as follows. Peptidoglycan polymerase that catalyzes glycan chain elongation from lipid-linked precursors. The polypeptide is Biosynthetic peptidoglycan transglycosylase (Xanthomonas oryzae pv. oryzae (strain KACC10331 / KXO85)).